Here is a 302-residue protein sequence, read N- to C-terminus: Putative gluconeogenesis factor (302 aa).

Belongs to the gluconeogenesis factor family.

The protein resides in the cytoplasm. Required for morphogenesis under gluconeogenic growth conditions. This chain is Putative gluconeogenesis factor (ybhK), found in Salmonella typhimurium (strain LT2 / SGSC1412 / ATCC 700720).